A 297-amino-acid chain; its full sequence is 33 kDa chaperonin (297 aa).

Intrachain disulfides connect cysteine 239/cysteine 241 and cysteine 272/cysteine 275.

Belongs to the HSP33 family. Under oxidizing conditions two disulfide bonds are formed involving the reactive cysteines. Under reducing conditions zinc is bound to the reactive cysteines and the protein is inactive.

The protein resides in the cytoplasm. Its function is as follows. Redox regulated molecular chaperone. Protects both thermally unfolding and oxidatively damaged proteins from irreversible aggregation. Plays an important role in the bacterial defense system toward oxidative stress. The polypeptide is 33 kDa chaperonin (Clostridium acetobutylicum (strain ATCC 824 / DSM 792 / JCM 1419 / IAM 19013 / LMG 5710 / NBRC 13948 / NRRL B-527 / VKM B-1787 / 2291 / W)).